Consider the following 57-residue polypeptide: MAPLRPTRPCPECGKPSTREAYPFCSPRCKNIDLNRWLSGSYVIAGKPLGEEDENDS.

Zn(2+)-binding residues include Cys10, Cys13, Cys25, and Cys29.

Belongs to the DNA gyrase inhibitor YacG family. Interacts with GyrB. The cofactor is Zn(2+).

Inhibits all the catalytic activities of DNA gyrase by preventing its interaction with DNA. Acts by binding directly to the C-terminal domain of GyrB, which probably disrupts DNA binding by the gyrase. The protein is DNA gyrase inhibitor YacG of Brucella abortus (strain 2308).